Consider the following 1818-residue polypeptide: Unconventional myosin-Vb (1818 aa).

The region spanning 8–60 (TRYTRVWIPDPDEVWRSAELTKDYKEGDKSLQLRLEDDTILEYPVDVQNNQVP) is the Myosin N-terminal SH3-like domain. Residues 21–40 (VWRSAELTKDYKEGDKSLQL) are requires for interaction with LIMA1. The Myosin motor domain maps to 69-762 (VGENDLTALS…QVAYLEKLRA (694 aa)). 163 to 170 (GESGAGKT) lines the ATP pocket. Positions 641–663 (LNLLMETLNATTPHYVRCIKPND) are actin-binding. IQ domains are found at residues 765–794 (FREA…ATLS), 788–817 (LRAA…TRAA), 813–842 (RTRA…ATVI), 836–865 (VCRA…EHKA), 861–890 (MEHK…AAIV), and 884–913 (ERDA…EARS). 2 disordered regions span residues 1086-1120 (LRDE…EIGD) and 1161-1188 (QAQL…VDQD). Polar residues predominate over residues 1098–1118 (PSNQSSLESDSNYPSISTSEI). Coiled coils occupy residues 1140 to 1261 (MTVF…LILR) and 1313 to 1415 (LEAQ…ALAQ). Ser-1416 bears the Phosphoserine mark. In terms of domain architecture, Dilute spans 1496–1773 (SSTINGIKKV…IRTIQAQLQE (278 aa)).

The protein belongs to the TRAFAC class myosin-kinesin ATPase superfamily. Myosin family. In terms of assembly, component of the CART complex, at least composed of ACTN4, HGS/HRS, MYO5B and TRIM3. Interacts with RAB11FIP2. Interacts with RAB11A and RAB8A. Found in a complex with CFTR and RAB11A. Interacts with NPC1L1. Interacts with LIMA1.

The protein localises to the cytoplasm. In terms of biological role, may be involved in vesicular trafficking via its association with the CART complex. The CART complex is necessary for efficient transferrin receptor recycling but not for EGFR degradation. Required in a complex with RAB11A and RAB11FIP2 for the transport of NPC1L1 to the plasma membrane. Together with RAB11A participates in CFTR trafficking to the plasma membrane and TF (transferrin) recycling in nonpolarized cells. Together with RAB11A and RAB8A participates in epithelial cell polarization. Together with RAB25 regulates transcytosis. Required for proper localization of bile salt export pump ABCB11 at the apical/canalicular plasma membrane of hepatocytes. The chain is Unconventional myosin-Vb (Myo5b) from Mus musculus (Mouse).